Consider the following 214-residue polypeptide: Ribosomal RNA small subunit methyltransferase G (214 aa).

Residues G73, L78, 124-125 (VE), and R139 each bind S-adenosyl-L-methionine.

It belongs to the methyltransferase superfamily. RNA methyltransferase RsmG family.

The protein resides in the cytoplasm. The catalysed reaction is guanosine(527) in 16S rRNA + S-adenosyl-L-methionine = N(7)-methylguanosine(527) in 16S rRNA + S-adenosyl-L-homocysteine. In terms of biological role, specifically methylates the N7 position of guanine in position 527 of 16S rRNA. This Aeromonas hydrophila subsp. hydrophila (strain ATCC 7966 / DSM 30187 / BCRC 13018 / CCUG 14551 / JCM 1027 / KCTC 2358 / NCIMB 9240 / NCTC 8049) protein is Ribosomal RNA small subunit methyltransferase G.